Consider the following 363-residue polypeptide: Putative agmatine deiminase 1 (363 aa).

Cys356 acts as the Amidino-cysteine intermediate in catalysis.

Belongs to the agmatine deiminase family.

It carries out the reaction agmatine + H2O = N-carbamoylputrescine + NH4(+). The polypeptide is Putative agmatine deiminase 1 (Listeria monocytogenes serovar 1/2a (strain ATCC BAA-679 / EGD-e)).